A 231-amino-acid polypeptide reads, in one-letter code: 2-C-methyl-D-erythritol 4-phosphate cytidylyltransferase (231 aa).

This sequence belongs to the IspD/TarI cytidylyltransferase family. IspD subfamily.

The catalysed reaction is 2-C-methyl-D-erythritol 4-phosphate + CTP + H(+) = 4-CDP-2-C-methyl-D-erythritol + diphosphate. Its pathway is isoprenoid biosynthesis; isopentenyl diphosphate biosynthesis via DXP pathway; isopentenyl diphosphate from 1-deoxy-D-xylulose 5-phosphate: step 2/6. Functionally, catalyzes the formation of 4-diphosphocytidyl-2-C-methyl-D-erythritol from CTP and 2-C-methyl-D-erythritol 4-phosphate (MEP). This Xylella fastidiosa (strain M23) protein is 2-C-methyl-D-erythritol 4-phosphate cytidylyltransferase.